The chain runs to 219 residues: Outer spore wall protein 4 (219 aa).

The N-terminal stretch at 1–19 (MRFQLFIYFYFTIVVIAGT) is a signal peptide. Residues 20 to 170 (NTIQQFSDAG…KKKRLDRIKR (151 aa)) are Extracellular-facing. N-linked (GlcNAc...) asparagine glycans are attached at residues N42, N62, and N136. A helical transmembrane segment spans residues 171–191 (ILTVSLLELGLAQGVADLCAV). Residues 192-193 (AP) lie on the Cytoplasmic side of the membrane. Residues 194–214 (FACLLGVTVGSIGFIFWLALI) traverse the membrane as a helical segment. The Extracellular segment spans residues 215–219 (YNAIQ).

It belongs to the OSW4/6 family. In terms of processing, N-glycosylated.

It is found in the membrane. Functionally, involved in spore wall assembly. May be involved in maintaining genome integrity. This chain is Outer spore wall protein 4, found in Saccharomyces cerevisiae (strain ATCC 204508 / S288c) (Baker's yeast).